Reading from the N-terminus, the 529-residue chain is Cytochrome P450 monooxygenase patI (529 aa).

Topologically, residues 1 to 8 are cytoplasmic; that stretch reads MDFTQVPP. A helical membrane pass occupies residues 9–25; sequence SYILGVLLSSTSILFCL. Over 26-529 the chain is Lumenal; that stretch reads KYLLRSGYRP…EAQGVFSRFD (504 aa). Residues asparagine 81 and asparagine 383 are each glycosylated (N-linked (GlcNAc...) asparagine). Residue cysteine 449 participates in heme binding.

The protein belongs to the cytochrome P450 family. Heme is required as a cofactor.

It is found in the endoplasmic reticulum membrane. It catalyses the reaction 3-hydroxybenzyl alcohol + reduced [NADPH--hemoprotein reductase] + O2 = gentisyl alcohol + oxidized [NADPH--hemoprotein reductase] + H2O + H(+). It functions in the pathway mycotoxin biosynthesis; patulin biosynthesis. Functionally, cytochrome P450 monooxygenase; part of the gene cluster that mediates the biosynthesis of patulin, an acetate-derived tetraketide mycotoxin produced by several fungal species that shows antimicrobial properties against several bacteria. PatI catalyzes the conversion of m-hydroxybenzyl alcohol into gentisyl alcohol. The pathway begins with the synthesis of 6-methylsalicylic acid by the polyketide synthase (PKS) patK via condensation of acetate and malonate units. The 6-methylsalicylic acid decarboxylase patG then catalyzes the decarboxylation of 6-methylsalicylic acid to yield m-cresol (also known as 3-methylphenol). These first reactions occur in the cytosol. The intermediate m-cresol is then transported into the endoplasmic reticulum where the cytochrome P450 monooxygenase patH converts it to m-hydroxybenzyl alcohol, which is further converted to gentisyl alcohol by the cytochrome P450 monooxygenase patI. The oxidoreductases patJ and patO further convert gentisyl alcohol to isoepoxydon in the vacuole. PatN catalyzes then the transformation of isoepoxydon into phyllostine. The cluster protein patF is responsible for the conversion from phyllostine to neopatulin whereas the alcohol dehydrogenase patD converts neopatulin to E-ascladiol. The steps between isoepoxydon and E-ascladiol occur in the cytosol, and E-ascladiol is probably secreted to the extracellular space by one of the cluster-specific transporters patC or patM. Finally, the secreted patulin synthase patE catalyzes the conversion of E-ascladiol to patulin. In Aspergillus clavatus (strain ATCC 1007 / CBS 513.65 / DSM 816 / NCTC 3887 / NRRL 1 / QM 1276 / 107), this protein is Cytochrome P450 monooxygenase patI.